Here is a 475-residue protein sequence, read N- to C-terminus: Glutamate--tRNA ligase 2 (475 aa).

A 'HIGH' region motif is present at residues 9 to 19 (PSPTGFLHIGS). The short motif at 238 to 242 (KLSKR) is the 'KMSKS' region element. An ATP-binding site is contributed by Lys241.

Belongs to the class-I aminoacyl-tRNA synthetase family. Glutamate--tRNA ligase type 1 subfamily. As to quaternary structure, monomer.

The protein localises to the cytoplasm. It catalyses the reaction tRNA(Glu) + L-glutamate + ATP = L-glutamyl-tRNA(Glu) + AMP + diphosphate. Its function is as follows. Catalyzes the attachment of glutamate to tRNA(Glu) in a two-step reaction: glutamate is first activated by ATP to form Glu-AMP and then transferred to the acceptor end of tRNA(Glu). This Bartonella quintana (strain Toulouse) (Rochalimaea quintana) protein is Glutamate--tRNA ligase 2.